The sequence spans 200 residues: Dephospho-CoA kinase (200 aa).

A DPCK domain is found at 4-200 (VLALTGGIAT…QLLIKIKEEG (197 aa)). Position 12–17 (12–17 (ATGKST)) interacts with ATP.

It belongs to the CoaE family.

The protein localises to the cytoplasm. It carries out the reaction 3'-dephospho-CoA + ATP = ADP + CoA + H(+). It functions in the pathway cofactor biosynthesis; coenzyme A biosynthesis; CoA from (R)-pantothenate: step 5/5. Catalyzes the phosphorylation of the 3'-hydroxyl group of dephosphocoenzyme A to form coenzyme A. In Lactobacillus acidophilus (strain ATCC 700396 / NCK56 / N2 / NCFM), this protein is Dephospho-CoA kinase.